We begin with the raw amino-acid sequence, 425 residues long: Proteinase-activated receptor 1 (425 aa).

An N-terminal signal peptide occupies residues 1–21 (MGPRRLLLVAACFSLCGPLLS). The propeptide occupies 22–41 (ARTRARRPESKATNATLDPR). N-linked (GlcNAc...) asparagine glycans are attached at residues asparagine 35, asparagine 62, and asparagine 75. The Extracellular portion of the chain corresponds to 42 to 102 (SFLLRNPNDK…SGYLTSSWLT (61 aa)). The chain crosses the membrane as a helical span at residues 103–128 (LFVPSVYTGVFVVSLPLNIMAIVVFI). The Cytoplasmic portion of the chain corresponds to 129–137 (LKMKVKKPA). Residues 138–157 (VVYMLHLATADVLFVSVLPF) form a helical membrane-spanning segment. The Extracellular portion of the chain corresponds to 158–176 (KISYYFSGSDWQFGSELCR). Cysteine 175 and cysteine 254 are oxidised to a cystine. The helical transmembrane segment at 177-198 (FVTAAFYCNMYASILLMTVISI) threads the bilayer. Residues 199–218 (DRFLAVVYPMQSLSWRTLGR) are Cytoplasmic-facing. The chain crosses the membrane as a helical span at residues 219–239 (ASFTCLAIWALAIAGVVPLLL). At 240 to 268 (KEQTIQVPGLNITTCHDVLNETLLEGYYA) the chain is on the extracellular side. Asparagine 250 and asparagine 259 each carry an N-linked (GlcNAc...) asparagine glycan. The helical transmembrane segment at 269-288 (YYFSAFSAVFFFVPLIISTV) threads the bilayer. At 289-311 (CYVSIIRCLSSSAVANRSKKSRA) the chain is on the cytoplasmic side. A helical transmembrane segment spans residues 312-334 (LFLSAAVFCIFIICFGPTNVLLI). Over 335–350 (AHYSFLSHTSTTEAAY) the chain is Extracellular. The chain crosses the membrane as a helical span at residues 351 to 374 (FAYLLCVCVSSISCCIDPLIYYYA). The Cytoplasmic segment spans residues 375–425 (SSECQRYVYSILCCKESSDPSSYNSSGQLMASKMDTCSSNLNNSIYKKLLT). Serine 418 bears the Phosphoserine mark.

This sequence belongs to the G-protein coupled receptor 1 family. Post-translationally, proteolytic cleavage by thrombin generates a new N-terminus that functions as a tethered ligand. Also proteolytically cleaved by cathepsin CTSG. Cleavage at 41-Arg-|-Ser-42 by CTSG results in receptor activation while cleavage at 55-Phe-|-Trp-56 results in inhibition of receptor activation. Phosphorylated in the C-terminal tail; probably mediating desensitization prior to the uncoupling and internalization of the receptor. In terms of tissue distribution, platelets and vascular endothelial cells.

It is found in the cell membrane. Its function is as follows. High affinity receptor that binds the activated thrombin, leading to calcium release from intracellular stores. The thrombin-activated receptor signaling pathway is mediated through PTX-insensitive G proteins, activation of phospholipase C resulting in the production of 1D-myo-inositol 1,4,5-trisphosphate (InsP3) which binds to InsP3 receptors causing calcium release from the stores. In astrocytes, the calcium released into the cytosol allows the Ca(2+)-dependent release of L-glutamate into the synaptic cleft through BEST1, that targets the neuronal postsynaptic GRIN2A/NMDAR receptor resulting in the synaptic plasticity regulation. May play a role in platelets activation and in vascular development. Mediates up-regulation of pro-inflammatory cytokines, such as MCP-1/CCL2 and IL6, triggered by coagulation factor Xa (F10) in cardiac fibroblasts and umbilical vein endothelial cells. The chain is Proteinase-activated receptor 1 from Homo sapiens (Human).